The chain runs to 201 residues: ATP-dependent Clp protease proteolytic subunit (201 aa).

S98 functions as the Nucleophile in the catalytic mechanism. Residue H123 is part of the active site.

This sequence belongs to the peptidase S14 family. Fourteen ClpP subunits assemble into 2 heptameric rings which stack back to back to give a disk-like structure with a central cavity, resembling the structure of eukaryotic proteasomes.

It localises to the cytoplasm. The enzyme catalyses Hydrolysis of proteins to small peptides in the presence of ATP and magnesium. alpha-casein is the usual test substrate. In the absence of ATP, only oligopeptides shorter than five residues are hydrolyzed (such as succinyl-Leu-Tyr-|-NHMec, and Leu-Tyr-Leu-|-Tyr-Trp, in which cleavage of the -Tyr-|-Leu- and -Tyr-|-Trp bonds also occurs).. Functionally, cleaves peptides in various proteins in a process that requires ATP hydrolysis. Has a chymotrypsin-like activity. Plays a major role in the degradation of misfolded proteins. This is ATP-dependent Clp protease proteolytic subunit from Rickettsia canadensis (strain McKiel).